The primary structure comprises 588 residues: Probable urocanate hydratase (588 aa).

Residues Met-1–Ala-15 are compositionally biased toward low complexity. The tract at residues Met-1 to Gly-22 is disordered. Residues Gly-62–Gly-63, Gln-140, Gly-188–Gly-190, Glu-208, Arg-213, Asn-254–Ala-255, Gln-275–His-279, and Tyr-334 each bind NAD(+). Cys-431 is an active-site residue. Gly-520 provides a ligand contact to NAD(+).

This sequence belongs to the urocanase family. The cofactor is NAD(+).

The protein resides in the cytoplasm. It carries out the reaction 4-imidazolone-5-propanoate = trans-urocanate + H2O. It functions in the pathway amino-acid degradation; L-histidine degradation into L-glutamate; N-formimidoyl-L-glutamate from L-histidine: step 2/3. Catalyzes the conversion of urocanate to 4-imidazolone-5-propionate. The sequence is that of Probable urocanate hydratase from Halobacterium salinarum (strain ATCC 29341 / DSM 671 / R1).